Consider the following 426-residue polypeptide: Putative phosphate permease CT_962 (426 aa).

Transmembrane regions (helical) follow at residues 1 to 21 (MWLL…NIGA), 37 to 57 (LTLK…AVLL), 83 to 103 (VFGM…ASFC), 104 to 124 (GWPV…GIIL), 140 to 160 (VSWL…FSFI), 183 to 203 (AIII…APVI), 207 to 227 (PALR…IWGI), 260 to 280 (LIVE…MSFA), 309 to 329 (VLLV…ATWG), 365 to 385 (LGFP…IGFA), and 399 to 419 (IVLS…VFFL).

This sequence belongs to the inorganic phosphate transporter (PiT) (TC 2.A.20) family.

The protein resides in the cell membrane. In terms of biological role, potential transporter for phosphate. This is Putative phosphate permease CT_962 from Chlamydia trachomatis serovar D (strain ATCC VR-885 / DSM 19411 / UW-3/Cx).